Reading from the N-terminus, the 685-residue chain is Probable transcriptional regulator SLK3 (685 aa).

Disordered regions lie at residues 25–66 (NLPG…ENSY) and 108–129 (LQQQ…SQRL). Residues 39–56 (QHLPQQQQRQLLEQQAGQ) show a composition bias toward low complexity. Positions 176–423 (PAENCITYWR…EHKVGPLEGL (248 aa)) are dimerization. The Nuclear localization signal signature appears at 185–199 (RKFVAEYFSPRAKQR). The span at 447 to 459 (GNSGAMSGPAQAQ) shows a compositional bias: polar residues. 3 disordered regions span residues 447 to 491 (GNSG…MNGS), 512 to 591 (NNQN…NTQE), and 611 to 658 (QQQA…NNLP). A compositionally biased stretch (low complexity) spans 460-471 (MTLSSGTMSGST). Residues 512–524 (NNQNSNTGNQEGF) are compositionally biased toward polar residues. Positions 525–543 (SSQNPTLNSNQSPSSSSQQ) are enriched in low complexity. 3 stretches are compositionally biased toward polar residues: residues 544–588 (RENL…SHGN), 611–636 (QQQA…TSNI), and 645–658 (RINS…NNLP).

Belongs to the adn1/SEU family.

It localises to the nucleus. Functionally, probable transcription regulator that functions in the development of the carpel margin meristem similarly to SEUSS (SEU). In association with SEU, supports organ development from meristematic regions by facilitating auxin response and thus organ initiation, and by sustaining meristematic potential through the maintenance of PHABULOSA expression. The polypeptide is Probable transcriptional regulator SLK3 (SLK3) (Arabidopsis thaliana (Mouse-ear cress)).